We begin with the raw amino-acid sequence, 273 residues long: Type III pantothenate kinase (273 aa).

5–12 contributes to the ATP binding site; that stretch reads DVGNSHVV. 112-115 is a binding site for substrate; that stretch reads GTDL. The Proton acceptor role is filled by D114. D134 contributes to the K(+) binding site. ATP is bound at residue T137. Residue T189 coordinates substrate.

The protein belongs to the type III pantothenate kinase family. In terms of assembly, homodimer. Requires NH4(+) as cofactor. It depends on K(+) as a cofactor.

It localises to the cytoplasm. It catalyses the reaction (R)-pantothenate + ATP = (R)-4'-phosphopantothenate + ADP + H(+). It participates in cofactor biosynthesis; coenzyme A biosynthesis; CoA from (R)-pantothenate: step 1/5. Its function is as follows. Catalyzes the phosphorylation of pantothenate (Pan), the first step in CoA biosynthesis. The protein is Type III pantothenate kinase of Treponema pallidum (strain Nichols).